Consider the following 149-residue polypeptide: Ribosome-binding factor A (149 aa).

A disordered region spans residues 125–149 (FGSADEVLNEDEGATDDTDDTKGKD). Acidic residues predominate over residues 131 to 143 (VLNEDEGATDDTD).

Belongs to the RbfA family. Monomer. Binds 30S ribosomal subunits, but not 50S ribosomal subunits or 70S ribosomes.

The protein localises to the cytoplasm. In terms of biological role, one of several proteins that assist in the late maturation steps of the functional core of the 30S ribosomal subunit. Associates with free 30S ribosomal subunits (but not with 30S subunits that are part of 70S ribosomes or polysomes). Required for efficient processing of 16S rRNA. May interact with the 5'-terminal helix region of 16S rRNA. This chain is Ribosome-binding factor A, found in Shewanella sp. (strain W3-18-1).